The following is a 369-amino-acid chain: Short chain dehydrogenase rstn4 (369 aa).

Residues Lys-88, Asp-111, Asn-138, Tyr-234, and Lys-238 each coordinate NADP(+). The active-site Proton donor is Tyr-234. Lys-238 serves as the catalytic Lowers pKa of active site Tyr.

Belongs to the short-chain dehydrogenases/reductases (SDR) family.

It participates in antifungal biosynthesis. Its function is as follows. Short chain dehydrogenase; part of the gene cluster that mediates the biosynthesis of the tetrahydropyranyl antifungal agent restricticin that acts as an inhibitor of CYP51 and blocks the ergosterol biosynthesis. The highly reducing polyketide synthase rstn3, the short chain dehydrogenase rstn4, the cyclase rstn5, the FAD-dependent monooxygenase rstn6 and the enoylreductase rstn7 are required to generate the first stable intermediate desmethylrestrictinol. Rstn3 with rstn7 biosynthesize the first polyketide chain intermediate that is reduced by rstn4, followed by epoxidation by rstn6 before 6-endo cyclization via epoxide opening by rstn5 leads to desmethylrestrictinol. The methyltransferase rstn1 then catalyzes the C4 O-methylation of desmethylrestrictinol to produce restrictinol, and the nonribosomal peptide synthetase rstn8 catalyzes the C3 esterification of restrictinol with glycine that leads to restricticin. This is Short chain dehydrogenase rstn4 from Aspergillus nomiae NRRL (strain ATCC 15546 / NRRL 13137 / CBS 260.88 / M93).